Consider the following 356-residue polypeptide: Phosphoserine aminotransferase (356 aa).

Position 41 (Arg41) interacts with L-glutamate. Pyridoxal 5'-phosphate contacts are provided by residues 76–77 (AS), Trp102, Thr150, Asp169, and Gln192. Lys193 is subject to N6-(pyridoxal phosphate)lysine. 234 to 235 (NT) provides a ligand contact to pyridoxal 5'-phosphate.

The protein belongs to the class-V pyridoxal-phosphate-dependent aminotransferase family. SerC subfamily. In terms of assembly, homodimer. Pyridoxal 5'-phosphate serves as cofactor.

The protein resides in the cytoplasm. It carries out the reaction O-phospho-L-serine + 2-oxoglutarate = 3-phosphooxypyruvate + L-glutamate. The catalysed reaction is 4-(phosphooxy)-L-threonine + 2-oxoglutarate = (R)-3-hydroxy-2-oxo-4-phosphooxybutanoate + L-glutamate. Its pathway is amino-acid biosynthesis; L-serine biosynthesis; L-serine from 3-phospho-D-glycerate: step 2/3. It functions in the pathway cofactor biosynthesis; pyridoxine 5'-phosphate biosynthesis; pyridoxine 5'-phosphate from D-erythrose 4-phosphate: step 3/5. Catalyzes the reversible conversion of 3-phosphohydroxypyruvate to phosphoserine and of 3-hydroxy-2-oxo-4-phosphonooxybutanoate to phosphohydroxythreonine. The chain is Phosphoserine aminotransferase from Flavobacterium johnsoniae (strain ATCC 17061 / DSM 2064 / JCM 8514 / BCRC 14874 / CCUG 350202 / NBRC 14942 / NCIMB 11054 / UW101) (Cytophaga johnsonae).